The chain runs to 118 residues: Myotrophin (118 aa).

ANK repeat units lie at residues Met-1 to Arg-30, Gly-34 to Asp-65, and His-67 to Gly-98.

The protein belongs to the myotrophin family.

It localises to the cytoplasm. It is found in the nucleus. The protein localises to the perinuclear region. Its function is as follows. Regulates NF-kappa-B transcription factor activity. Promotes growth of cardiomyocytes, but not cardiomyocyte proliferation. Promotes cardiac muscle hypertrophy. Plays a role in the regulation of the growth of actin filaments. Inhibits the activity of the F-actin-capping protein complex. The polypeptide is Myotrophin (mtpn) (Xenopus laevis (African clawed frog)).